We begin with the raw amino-acid sequence, 900 residues long: Chromodomain-helicase-DNA-binding protein 1-like (900 aa).

The Helicase ATP-binding domain maps to 52–217 (VQCFHCQNGC…YSLLCVVEPD (166 aa)). 65 to 72 (DEMGLGKT) is an ATP binding site. The short motif at 168–171 (DEAH) is the DEAH box element. The Helicase C-terminal domain maps to 345-507 (LLDRLLAFLY…QKPSAEADFQ (163 aa)). Phosphoserine is present on serine 534. Residues 546 to 569 (PDALPAAAAAGGGSLEPEEGSELE) form a disordered region. Residues 606–640 (TLLEKTSHGGRTLRNKGSVLIPGLAEGPIKRKKIL) are regulatory linker segment (RLS). Residues serine 612, serine 623, and serine 641 each carry the phosphoserine modification. The interval 620 to 678 (NKGSVLIPGLAEGPIKRKKILSPEELEDRRKKRQEAAAKRKRLMEEKRKEKEEAEHRKK) is required for ATPase activity. A disordered region spans residues 641–673 (SPEELEDRRKKRQEAAAKRKRLMEEKRKEKEEA). Residues 643 to 680 (EELEDRRKKRQEAAAKRKRLMEEKRKEKEEAEHRKKMA) are a coiled coil. The segment covering 653–673 (QEAAAKRKRLMEEKRKEKEEA) has biased composition (basic and acidic residues). The 192-residue stretch at 709–900 (SAELAYEDLD…ASSSSAPLVP (192 aa)) folds into the Macro domain. Residue serine 894 is modified to Phosphoserine.

It belongs to the SNF2/RAD54 helicase family. As to quaternary structure, interacts with nucleosomes; interacts with the acidic patch of histones. Interacts (via macro domain) with PARP1; interacts only when PARP1 is poly-ADP-ribosylated (PARylated). Interacts with CIAO1.

The protein localises to the nucleus. It is found in the chromosome. The enzyme catalyses ATP + H2O = ADP + phosphate + H(+). Adopts an inactive conformation in absence of DNA damage. Binding to poly-ADP-ribosylated histones activates the ATP-dependent chromatin remodeler activity. In terms of biological role, ATP-dependent chromatin remodeler that mediates chromatin-remodeling following DNA damage. Recruited to DNA damage sites through interaction with poly-ADP-ribose: specifically recognizes and binds histones that are poly-ADP-ribosylated on serine residues in response to DNA damage. Poly-ADP-ribose-binding activates the ATP-dependent chromatin remodeler activity, thereby regulating chromatin during DNA repair. Catalyzes nucleosome sliding away from DNA breaks in an ATP-dependent manner. Chromatin remodeling activity promotes PARP2 removal from chromatin. This Mus musculus (Mouse) protein is Chromodomain-helicase-DNA-binding protein 1-like (Chd1l).